The following is a 316-amino-acid chain: Olfactory receptor 4N4C (316 aa).

The Cytoplasmic segment spans residues 1-26 (MKIANNTVVTEFILLGLTQSQDIQLL). Residues 27-47 (VFVLILIFYLIILPGNFLIIF) form a helical membrane-spanning segment. Topologically, residues 48–56 (TIRSDPGLT) are extracellular. A helical transmembrane segment spans residues 57–77 (APLYLFLGNLAFLDASYSFIV). Over 78 to 99 (APRMLVDFLSEKKVISYRGCIT) the chain is Cytoplasmic. Residues Cys-97 and Cys-179 are joined by a disulfide bond. Residues 100–120 (QLFFLHFLGGGEGLLLVVMAF) form a helical membrane-spanning segment. The Extracellular segment spans residues 121–143 (DRYIAICRPLHCSTVMNPRACYA). The chain crosses the membrane as a helical span at residues 144–164 (MMLALWLGGFVHSIIQVVLIL). At 165–204 (RLPFCGPNQLDNFFCDVRQVIKLACTDMFVVELLMVFNSG) the chain is on the cytoplasmic side. Residues 205 to 225 (LMTLLCFLGLLASYAVILCHV) traverse the membrane as a helical segment. Residues 226 to 243 (RRAASEGKNKAMSTCTTR) are Extracellular-facing. The helical transmembrane segment at 244–264 (VIIILLMFGPAIFIYICPFRA) threads the bilayer. The Cytoplasmic portion of the chain corresponds to 265–268 (LPAD). A helical membrane pass occupies residues 269–289 (KMVSLFHTVIFPLMNPMIYTL). The Extracellular portion of the chain corresponds to 290 to 316 (RNQEVKTSMKRLLSRHVVCQVDFIIRN).

Belongs to the G-protein coupled receptor 1 family.

It is found in the membrane. Functionally, odorant receptor. In Homo sapiens (Human), this protein is Olfactory receptor 4N4C.